We begin with the raw amino-acid sequence, 216 residues long: Uracil phosphoribosyltransferase (216 aa).

5-phospho-alpha-D-ribose 1-diphosphate-binding positions include arginine 85, arginine 110, and aspartate 135–serine 143. Uracil-binding positions include isoleucine 200 and glycine 205–alanine 207. Position 206 (aspartate 206) interacts with 5-phospho-alpha-D-ribose 1-diphosphate.

It belongs to the UPRTase family. Requires Mg(2+) as cofactor.

It carries out the reaction UMP + diphosphate = 5-phospho-alpha-D-ribose 1-diphosphate + uracil. It functions in the pathway pyrimidine metabolism; UMP biosynthesis via salvage pathway; UMP from uracil: step 1/1. Its activity is regulated as follows. Allosterically activated by GTP. Catalyzes the conversion of uracil and 5-phospho-alpha-D-ribose 1-diphosphate (PRPP) to UMP and diphosphate. This Paraburkholderia xenovorans (strain LB400) protein is Uracil phosphoribosyltransferase.